The primary structure comprises 2969 residues: Histone-lysine N-methyltransferase ASH1L (2969 aa).

2 disordered regions span residues 1 to 70 and 118 to 143; these read MDPR…TDAQ and HPRK…RDPS. The segment covering 21–31 has biased composition (polar residues); it reads KSPSAISTGTL. Ser-22 is subject to Phosphoserine. Composition is skewed to basic and acidic residues over residues 33 to 65 and 127 to 143; these read SKRE…KDDG and KMTD…RDPS. A Glycyl lysine isopeptide (Lys-Gly) (interchain with G-Cter in SUMO2) cross-link involves residue Lys-34. The residue at position 375 (Lys-375) is an N6-acetyllysine. Residue Lys-425 forms a Glycyl lysine isopeptide (Lys-Gly) (interchain with G-Cter in SUMO2) linkage. Residues 501–511 are compositionally biased toward polar residues; the sequence is IQQDSFSSSEK. Disordered regions lie at residues 501 to 525, 537 to 583, 824 to 845, 878 to 966, 1100 to 1128, 1151 to 1231, and 1243 to 1281; these read IQQD…QPPV, ASDV…PNPL, YKPK…PPKR, KQGL…EMEP, SEIL…AGFV, MKKA…EHVS, and SLKE…QLRN. A compositionally biased stretch (basic and acidic residues) spans 512 to 522; sequence GSYETSKHEKQ. Positions 554-579 are enriched in polar residues; the sequence is NLPSPSPTVSVNPLTRSPPETSSQLA. Over residues 887-897 the composition is skewed to basic residues; that stretch reads PKKRGRPKRQM. A DNA-binding region (a.T hook 1) is located at residues 887-899; sequence PKKRGRPKRQMRS. Over residues 920–932 the composition is skewed to basic and acidic residues; sequence SKLESESDNHRSS. Over residues 936-949 the composition is skewed to acidic residues; the sequence is FESEDQLQDPDDLD. Low complexity-rich tracts occupy residues 1100 to 1123 and 1162 to 1175; these read SEIL…PVSS and SPPT…SHLS. Residues Ser-1162 and Ser-1170 each carry the phosphoserine modification. The segment covering 1186 to 1211 has biased composition (polar residues); that stretch reads SPISESHSDETIPSDSGIGTDNNSTS. N5-methylglutamine is present on Gln-1220. 2 stretches are compositionally biased toward basic residues: residues 1246–1256 and 1266–1277; these read EKHKHKCKRRN and KRQKRKRKKKYP. The a.T hook 2 DNA-binding region spans 1347 to 1359; the sequence is KKKRGRPPKMREA. Disordered regions lie at residues 1489-1508, 1580-1711, and 1741-1761; these read HREH…GSSR, SESS…ASGD, and ASAP…TLGK. Polar residues-rich tracts occupy residues 1496–1508, 1580–1598, 1605–1622, and 1650–1680; these read EQPQ…GSSR, SESS…SEPA, NLFT…PNSS, and LPSN…STNC. A compositionally biased stretch (low complexity) spans 1741–1751; that stretch reads ASAPPSSSPGR. The segment at residues 1847 to 1859 is a DNA-binding region (a.T hook 3); sequence KRRPGRPRKCPLQ. Residues 1911-1991 form a disordered region; the sequence is KKGLKRKGWL…PRPPKKKYQK (81 aa). The interval 2069-2288 is catalytic domain; that stretch reads PDVPLYKKIR…KCRGIIGGKS (220 aa). The AWS domain maps to 2091–2142; it reads YEATTCNCKKPDDDTRKGCVDDCLNRMIFAECSPNTCPCGEQCCNQRIQRHE. Residues 2145–2261 form the SET domain; the sequence is QCLERFRAEE…AGTELTYDYN (117 aa). In terms of domain architecture, Post-SET spans 2269–2285; sequence KQQLCKCGFEKCRGIIG. Residues 2288–2346 are disordered; sequence SQRVNGLTSSKNSQPMATHKKSGRSKEKRKSKHKLKKRRGHLSEEPSENINTPTRLTPQ. A compositionally biased stretch (polar residues) spans 2289–2303; the sequence is QRVNGLTSSKNSQPM. The span at 2305 to 2327 shows a compositional bias: basic residues; the sequence is THKKSGRSKEKRKSKHKLKKRRG. Lys-2317, Lys-2319, and Lys-2323 each carry N6-acetyllysine. Residues 2335-2346 show a composition bias toward polar residues; the sequence is ENINTPTRLTPQ. In terms of domain architecture, Bromo spans 2444–2550; sequence RLAQIFKEIC…KAYYNARHEA (107 aa). The PHD-type zinc finger occupies 2585-2631; it reads VIRCICGLYKDEGLMIQCDKCMVWQHCDCMGVNSDVEHYLCEQCDPR. The BAH domain maps to 2661-2798; that stretch reads LLLRQGDCVY…KSAHLFYKIH (138 aa). Disordered stretches follow at residues 2825-2856 and 2876-2919; these read SPHY…DLGQ and NEIP…RRHN. Residues 2842–2855 show a composition bias toward basic and acidic residues; that stretch reads WKSERSKPPLKDLG.

This sequence belongs to the class V-like SAM-binding methyltransferase superfamily. Histone-lysine methyltransferase family. SET2 subfamily. In terms of processing, methylated at Gln-1220 by N6AMT1. As to expression, widely expressed, with highest level in brain, heart and kidney.

The protein resides in the nucleus. Its subcellular location is the cell junction. It localises to the tight junction. It is found in the chromosome. It carries out the reaction L-lysyl(36)-[histone H3] + 3 S-adenosyl-L-methionine = N(6),N(6),N(6)-trimethyl-L-lysyl(36)-[histone H3] + 3 S-adenosyl-L-homocysteine + 3 H(+). It catalyses the reaction L-lysyl(9)-[histone H3] + S-adenosyl-L-methionine = N(6)-methyl-L-lysyl(9)-[histone H3] + S-adenosyl-L-homocysteine + H(+). In terms of biological role, histone methyltransferase specifically trimethylating 'Lys-36' of histone H3 forming H3K36me3. Also monomethylates 'Lys-9' of histone H3 (H3K9me1) in vitro. The physiological significance of the H3K9me1 activity is unclear. The sequence is that of Histone-lysine N-methyltransferase ASH1L (ASH1L) from Homo sapiens (Human).